Reading from the N-terminus, the 81-residue chain is RNA-binding protein Hfq (81 aa).

The Sm domain occupies 11 to 71 (DIFLNNARKN…ISTITPTKPI (61 aa)).

The protein belongs to the Hfq family. In terms of assembly, homohexamer.

Its function is as follows. RNA chaperone that binds small regulatory RNA (sRNAs) and mRNAs to facilitate mRNA translational regulation in response to envelope stress, environmental stress and changes in metabolite concentrations. Also binds with high specificity to tRNAs. This is RNA-binding protein Hfq from Clostridium beijerinckii (strain ATCC 51743 / NCIMB 8052) (Clostridium acetobutylicum).